We begin with the raw amino-acid sequence, 75 residues long: UPF0352 protein VV1166 (75 aa).

This sequence belongs to the UPF0352 family.

The protein is UPF0352 protein VV1166 of Vibrio vulnificus (strain YJ016).